Reading from the N-terminus, the 400-residue chain is uncharacterized protein (400 aa).

36–43 (GSINSGKT) contacts ATP.

Belongs to the archaeal ATPase family.

This is an uncharacterized protein from Methanocaldococcus jannaschii (strain ATCC 43067 / DSM 2661 / JAL-1 / JCM 10045 / NBRC 100440) (Methanococcus jannaschii).